The primary structure comprises 349 residues: Phenylalanine--tRNA ligase alpha subunit (349 aa).

Glu-258 serves as a coordination point for Mg(2+).

The protein belongs to the class-II aminoacyl-tRNA synthetase family. Phe-tRNA synthetase alpha subunit type 1 subfamily. Tetramer of two alpha and two beta subunits. Requires Mg(2+) as cofactor.

The protein resides in the cytoplasm. The catalysed reaction is tRNA(Phe) + L-phenylalanine + ATP = L-phenylalanyl-tRNA(Phe) + AMP + diphosphate + H(+). The protein is Phenylalanine--tRNA ligase alpha subunit of Rickettsia bellii (strain RML369-C).